The chain runs to 371 residues: MDPDRQADIAALAATLTTVERVLDVDGLRDRIQKLEQEASDPNLWDDQSRAQKVTSELSHAQNELRRVEELRQRVEDLPVLYEMAAEEEGQDAENAGAEADAELAKLRVDIEAMEVRTLLSGEYDEREAVVTIRSGAGGVDAADWAEMLMRMYIRWAEQHDYPVEVFDTSYAEEAGIKSATFAVHAPYAYGTLSVEQGTHRLVRISPFDNQSRRQTSFADVEVLPVVETTDHIDVPETDLRVDVYRSSGPGGQSVNTTDSAVRLTHIPTGIVVTCQNEKSQLQNKVAAMRVLQAKLLARKKQEERAELDALKGDGGSSWGNQMRSYVLHPYQMVKDLRTEYEVGNPSAVLDGDIDGFLEAGIRWRNRRDDD.

At Gln253 the chain carries N5-methylglutamine.

It belongs to the prokaryotic/mitochondrial release factor family. Methylated by PrmC. Methylation increases the termination efficiency of RF2.

It is found in the cytoplasm. Functionally, peptide chain release factor 2 directs the termination of translation in response to the peptide chain termination codons UGA and UAA. This chain is Peptide chain release factor 2, found in Mycobacterium sp. (strain KMS).